The primary structure comprises 65 residues: Large ribosomal subunit protein bL35 (65 aa).

The protein belongs to the bacterial ribosomal protein bL35 family.

This is Large ribosomal subunit protein bL35 from Prochlorococcus marinus subsp. pastoris (strain CCMP1986 / NIES-2087 / MED4).